We begin with the raw amino-acid sequence, 1062 residues long: MSENTTAPSDNITNEQRLPSGPKDDVDTLALTSAQNQANSLRKLDTDANAKALPSITDIPVSDDSDIKRQVGSGFGSNPLHIKDSEAFPHSSIEALKEGMDKVTKQCNDLKTALLSKDTSLTDSVQDLFNSLKVLSHNQSVLENKLDDVMKNQVNTDILVNNLNERLNKLSTMLQNTSKVNHSNLLIENSSNNTSSQHNTSSSRRGPGRPRKDASTSTMNKLVSNAASVNLKSASNQGAPFSPVNITLPTAVVQTSKSKRYFVEPSTKQESLLLSAPSSSRDDADMSLTSVPQRTNNENGKERPSTANSSSITPTPVTPNNLIQIKRKRGRPPKKRTVETMISNSTDTIDKSDASNRIKNEIPINSLLPSSKFHQIPSSPSNPVSQPAPVRTSRSATQEIDIKSLELASLISTNGDPNAEDSNTTDTVHNNVEGKVNVEENKTEKEKIITIKSSSENSGNNTTNNNNTDNVIKFSANSDINSDIRRLMVNDQFSLSYDASGNITVKLPPVSSPAAATAAAAAAVTSEMNRQQRELDKRRDSREKMLVNMKYNDRDKAKSFMESNKKLLKAMKEEERRKRMTSIIHDNHLNLNLNEISTRSKIKSAEKPTTKGSSMSPKPRSASISGISDHQQEGYQPLEQEKLVDIDNEGSNANSDSLKMGLTISAADTVHKVGIQSMLNSGEEAITKENAEYERKTPGDEETTTFVPLENSQPSDTIRKRTAGDDGALDQTENTSISPKKRRTEDHTKGEEDEGERGVGNSGTLATVENVSGDISADLSKGTSSIHNDTESANDSSNGNGNLGLGTESRNTLLTATPIELICREGFFYRRDIPDVPITTGAYLEFKFKAKEEELINSSINEEDYAAKSKHEKMNAHFFKPDIQEETELAFEILSKTTLTEKYVNSLEYFLMEFRWENKLVGLGLKLRESKRTWQRRKALFALFEFWRDQSRDKRRFHNYTILHAVKEMENYRIFINRSVSWFYNHITLLKMILYDLCDNVTTQWREWMFPHNETLPALGQDGINEDNLNETIDNMLIFDFLDDGSENNQVKYSRIIPPDIR.

Residues 1–17 (MSENTTAPSDNITNEQR) are compositionally biased toward polar residues. Disordered regions lie at residues 1-27 (MSENTTAPSDNITNEQRLPSGPKDDVD), 188-217 (ENSSNNTSSQHNTSSSRRGPGRPRKDASTS), 267-337 (TKQE…KKRT), 370-398 (SSKFHQIPSSPSNPVSQPAPVRTSRSATQ), 595-634 (EISTRSKIKSAEKPTTKGSSMSPKPRSASISGISDHQQEG), and 681-804 (SGEE…GNLG). N-acetylserine is present on Ser-2. Positions 189 to 205 (NSSNNTSSQHNTSSSRR) are enriched in low complexity. Composition is skewed to polar residues over residues 267-279 (TKQESLLLSAPSS), 287-298 (SLTSVPQRTNNE), and 305-323 (STANSSSITPTPVTPNNLI). The segment covering 325 to 335 (IKRKRGRPPKK) has biased composition (basic residues). Polar residues-rich tracts occupy residues 370-385 (SSKFHQIPSSPSNPVS) and 610-629 (TKGSSMSPKPRSASISGISD). Ser-378, Ser-379, Ser-628, and Ser-681 each carry phosphoserine. The segment covering 685–699 (AITKENAEYERKTPG) has biased composition (basic and acidic residues). Residue Thr-697 is modified to Phosphothreonine. Residues 704 to 716 (TTFVPLENSQPSD) are compositionally biased toward polar residues. Residue Ser-712 is modified to Phosphoserine; by ATM or ATR. Ser-738 carries the phosphoserine modification. The span at 781 to 793 (KGTSSIHNDTESA) shows a compositional bias: polar residues. Phosphothreonine is present on Thr-817.

As to quaternary structure, interacts with RFM1. This interaction is required to recruit HST1.

The protein resides in the nucleus. DNA-binding protein that specifically binds the regulatory region of middle sporulation genes (MSE). Required for the repression of middle sporulation genes during vegetative growth. Represses expression via the recruitment of histone deacetylase HST1. The sequence is that of Suppressor of mar1-1 protein (SUM1) from Saccharomyces cerevisiae (strain ATCC 204508 / S288c) (Baker's yeast).